We begin with the raw amino-acid sequence, 603 residues long: Elongation factor 4 (603 aa).

The tr-type G domain maps to 7-189; sequence SRLRNFCIIA…AVVDRIPSPK (183 aa). GTP-binding positions include 19 to 24 and 136 to 139; these read DHGKST and NKVD.

This sequence belongs to the TRAFAC class translation factor GTPase superfamily. Classic translation factor GTPase family. LepA subfamily.

It localises to the cell inner membrane. It carries out the reaction GTP + H2O = GDP + phosphate + H(+). Its function is as follows. Required for accurate and efficient protein synthesis under certain stress conditions. May act as a fidelity factor of the translation reaction, by catalyzing a one-codon backward translocation of tRNAs on improperly translocated ribosomes. Back-translocation proceeds from a post-translocation (POST) complex to a pre-translocation (PRE) complex, thus giving elongation factor G a second chance to translocate the tRNAs correctly. Binds to ribosomes in a GTP-dependent manner. This chain is Elongation factor 4, found in Prochlorococcus marinus (strain NATL2A).